The sequence spans 265 residues: tRNA pseudouridine synthase A (265 aa).

The active-site Nucleophile is the Asp53. Tyr111 lines the substrate pocket.

This sequence belongs to the tRNA pseudouridine synthase TruA family. As to quaternary structure, homodimer.

It catalyses the reaction uridine(38/39/40) in tRNA = pseudouridine(38/39/40) in tRNA. Formation of pseudouridine at positions 38, 39 and 40 in the anticodon stem and loop of transfer RNAs. The protein is tRNA pseudouridine synthase A of Acinetobacter baumannii (strain ATCC 17978 / DSM 105126 / CIP 53.77 / LMG 1025 / NCDC KC755 / 5377).